We begin with the raw amino-acid sequence, 235 residues long: Tetraspanin-8 (235 aa).

At 1–12 the chain is on the cytoplasmic side; it reads MAGVSSCLKYSM. The chain crosses the membrane as a helical span at residues 13–33; it reads FFFNFLFWVCGTLILGLAIWV. Residues 34-52 are Extracellular-facing; the sequence is RVSKDGKEIITSGDSSTNP. A helical membrane pass occupies residues 53–73; the sequence is FIAVNILIAVGSIIMVLGFLG. Residues 74–84 are Cytoplasmic-facing; sequence CCGAVKESRCM. Residues 85–105 traverse the membrane as a helical segment; it reads LLLFFIGLLLILILQVAAGIL. Residues 106–203 are Extracellular-facing; that stretch reads GAAFKPEYNR…SLIKDLFEKN (98 aa). Asn-118 carries N-linked (GlcNAc...) asparagine glycosylation. A helical transmembrane segment spans residues 204–224; that stretch reads IIIVIGIAFGLAVIEILGLVF. Residues 225-235 lie on the Cytoplasmic side of the membrane; it reads SMVLYCQIGSK.

This sequence belongs to the tetraspanin (TM4SF) family. As to quaternary structure, forms homooligomers. Interacts with MEP1B. Interacts with integrin alpha3/ITGA3. Interacts with RICTOR and MTOR. Interacts with ADAM17. Interacts with ECE1.

Its subcellular location is the cell membrane. Structural component of specialized membrane microdomains known as tetraspanin-enriched microdomains (TERMs), which act as platforms for receptor clustering and signaling. Participates thereby in diverse biological functions such as cell signal transduction, migration and protein trafficking. Promotes ADAM17-mediated TNF-alpha processing through recruitment of ADAM17 to tetraspanin-enriched micro-domains (TEMs). Forms a complex with RICTOR and integrin alpha3/ITGA3 to mediate mTORC2 activation and AKT1 phosphorylation leading to cell migration. Reduces apoptosis and autophagy induced by high glucose levels through forming a complex with mTOR and RICTOR. Contributes to the maintenance of intestinal epithelial barrier and plays a role in the regulation of intestine inflammation by switching interferon gamma receptor 1/IFNGR1 from clathrin-dependent to lipid raft-dependent endocytosis route to limit STAT1 activation magnitude and duration. Acts as a modulator of the endothelin axis by associating with endothelin converting enzyme ECE1 and regulating its activity of conversion of the endothelin-1 precursor to endothelin. This is Tetraspanin-8 (Tspan8) from Mus musculus (Mouse).